The chain runs to 249 residues: LLMCNLCFADICFTSASIPTNLVNIQTKNKVITYEGCISQVYFFILFGVLDNFLLAVMAYDRYVAICHPLHYTVIMNRRLCGLLVLGSWVTTALNSLLQSSMALRLSFCTDLKIPHFVCELNQLVLLACNDTFPNDMVMYFAAVLLGGGPLAGILYSYSKIVSSIRAISSSQGKYKAFSTCASHLSVVSLFYSTLLGVYLSSSFTQNSHSTARASVMYSVVTPMLNPFIYSLRNKDLMGALRRLFRRKP.

The helical transmembrane segment at leucine 1–alanine 9 threads the bilayer. Topologically, residues aspartate 10–glutamine 40 are extracellular. Cysteines 37 and 119 form a disulfide. A helical membrane pass occupies residues valine 41–tyrosine 60. The Cytoplasmic portion of the chain corresponds to aspartate 61 to glycine 82. A helical membrane pass occupies residues leucine 83–alanine 103. Residues leucine 104 to aspartate 136 are Extracellular-facing. The N-linked (GlcNAc...) asparagine glycan is linked to asparagine 130. The chain crosses the membrane as a helical span at residues methionine 137–tyrosine 158. Over serine 159 to threonine 180 the chain is Cytoplasmic. Residues cysteine 181–leucine 200 form a helical membrane-spanning segment. Residues serine 201–serine 210 lie on the Extracellular side of the membrane. Residues threonine 211 to leucine 232 traverse the membrane as a helical segment. Over arginine 233 to proline 249 the chain is Cytoplasmic.

This sequence belongs to the G-protein coupled receptor 1 family. Tongue specific.

The protein resides in the cell membrane. In terms of biological role, possible taste receptor. The sequence is that of Olfactory receptor 1571 (Olr1571) from Rattus norvegicus (Rat).